A 103-amino-acid chain; its full sequence is Small ribosomal subunit protein uS10 (103 aa).

Belongs to the universal ribosomal protein uS10 family. Part of the 30S ribosomal subunit.

Functionally, involved in the binding of tRNA to the ribosomes. The protein is Small ribosomal subunit protein uS10 of Thioalkalivibrio sulfidiphilus (strain HL-EbGR7).